Reading from the N-terminus, the 1701-residue chain is Rho guanine nucleotide exchange factor TIAM2 (1701 aa).

Disordered stretches follow at residues 1-21 (MGNSDSQYTLQGSKNHSNTIT), 201-250 (SPTL…SSWY), 265-293 (GSFLAPGMPDPSLHASFPPGDAKKPFNQS), and 389-417 (SLSRKKRKLQEPRSKEGSDYFDSRSDGLN). G2 is lipidated: N-myristoyl glycine. Positions 238–248 (SKGSSLSSESS) are enriched in low complexity. Basic and acidic residues predominate over residues 397–413 (LQEPRSKEGSDYFDSRS). The region spanning 506–620 (VVRKAGWLFF…WVTAVHSACA (115 aa)) is the PH 1 domain. A coiled-coil region spans residues 628-695 (GKEDTLRLLK…KFHMDLFRMR (68 aa)). The 72-residue stretch at 810-881 (IQTYVHFQDN…YMQQQVYDEI (72 aa)) folds into the RBD domain. The 87-residue stretch at 890–976 (DVQLTKTGSV…GLTLIARPPD (87 aa)) folds into the PDZ domain. A disordered region spans residues 1070-1092 (DSQANGMEGPRENQDPPPRSLAR). Residues 1099–1293 (RLRKVIQELV…EKVASHINEM (195 aa)) enclose the DH domain. Positions 1347 to 1478 (DLELTVFVFK…EKTCKDRLVP (132 aa)) constitute a PH 2 domain. Disordered regions lie at residues 1500-1556 (NSSS…GLAD) and 1568-1628 (LSDE…PKLV). The segment covering 1513–1527 (GTLLDSDEGSLSSGT) has biased composition (low complexity). Residue S1583 is modified to Phosphoserine. Basic and acidic residues predominate over residues 1596–1607 (RISEDPDVHPEA). Residue T1648 is modified to Phosphothreonine.

The protein belongs to the TIAM family. Interacts with MAP1A, MAP1B, PARP1 and YWHAE. Interacts with CD44, PARD3 and MAPK8IP2. Phosphorylated on serine and threonine residues. Phosphorylated on Thr-1648 by Rho-kinase. Its phosphorylation by Rho-kinase inhibits its guanine nucleotide exchange activity, its interaction with MAP1A, MAP1B, PARP1 and YWHAE and reduces its ability to promote neurite growth. Expressed in the occipital, frontal and temporal lobes, cerebellum, putamen and testis.

It is found in the cytoplasm. Its subcellular location is the cell projection. It localises to the lamellipodium. The protein localises to the filopodium. The protein resides in the growth cone. It is found in the neuron projection. Its subcellular location is the perikaryon. In terms of biological role, modulates the activity of RHO-like proteins and connects extracellular signals to cytoskeletal activities. Acts as a GDP-dissociation stimulator protein that stimulates the GDP-GTP exchange activity of RHO-like GTPases and activates them. Mediates extracellular laminin signals to activate Rac1, contributing to neurite growth. Involved in lamellipodial formation and advancement of the growth cone of embryonic hippocampal neurons. Promotes migration of neurons in the cerebral cortex. When overexpressed, induces membrane ruffling accompanied by the accumulation of actin filaments along the altered plasma membrane. Activates specifically RAC1, but not CDC42 and RHOA. This Homo sapiens (Human) protein is Rho guanine nucleotide exchange factor TIAM2 (TIAM2).